The sequence spans 162 residues: MKKPFRIGFGFDVHRLSEGYPLWMGGVRLEHSKGLEGHSDADVLIHAICDALLGAAALRDIGYHFPPSDPQYKGIDSKILLARAMELVRSQGYELGNIDATIAAEQPKLNPHIPDMQRVLAEVIQVEVSDISLKATTTEKLGFTGREEGISAYAVALLIAAV.

Aspartate 12 and histidine 14 together coordinate a divalent metal cation. Residues 12-14 and 38-39 contribute to the 4-CDP-2-C-methyl-D-erythritol 2-phosphate site; these read DVH and HS. Histidine 46 serves as a coordination point for a divalent metal cation. 4-CDP-2-C-methyl-D-erythritol 2-phosphate is bound by residues 60–62, 136–139, phenylalanine 143, and arginine 146; these read DIG and TTTE.

It belongs to the IspF family. In terms of assembly, homotrimer. A divalent metal cation serves as cofactor.

The enzyme catalyses 4-CDP-2-C-methyl-D-erythritol 2-phosphate = 2-C-methyl-D-erythritol 2,4-cyclic diphosphate + CMP. It functions in the pathway isoprenoid biosynthesis; isopentenyl diphosphate biosynthesis via DXP pathway; isopentenyl diphosphate from 1-deoxy-D-xylulose 5-phosphate: step 4/6. Functionally, involved in the biosynthesis of isopentenyl diphosphate (IPP) and dimethylallyl diphosphate (DMAPP), two major building blocks of isoprenoid compounds. Catalyzes the conversion of 4-diphosphocytidyl-2-C-methyl-D-erythritol 2-phosphate (CDP-ME2P) to 2-C-methyl-D-erythritol 2,4-cyclodiphosphate (ME-CPP) with a corresponding release of cytidine 5-monophosphate (CMP). This Porphyromonas gingivalis (strain ATCC 33277 / DSM 20709 / CIP 103683 / JCM 12257 / NCTC 11834 / 2561) protein is 2-C-methyl-D-erythritol 2,4-cyclodiphosphate synthase.